Here is a 425-residue protein sequence, read N- to C-terminus: Probable isoprenylcysteine alpha-carbonyl methylesterase ICMEL1 (425 aa).

Residues methionine 1–alanine 10 are compositionally biased toward basic and acidic residues. Positions methionine 1–glycine 42 are disordered. Over residues proline 24–alanine 34 the composition is skewed to low complexity. The next 2 membrane-spanning stretches (helical) occupy residues phenylalanine 99 to tyrosine 119 and valine 154 to leucine 174. Substrate contacts are provided by residues glycine 160–alanine 162 and glutamine 231–alanine 233. Catalysis depends on residues serine 232, aspartate 334, and histidine 366.

The protein belongs to the AB hydrolase superfamily. Isoprenylcysteine methylesterase family.

It is found in the endoplasmic reticulum membrane. Its subcellular location is the golgi apparatus membrane. The enzyme catalyses [protein]-C-terminal S-[(2E,6E)-farnesyl]-L-cysteine methyl ester + H2O = [protein]-C-terminal S-[(2E,6E)-farnesyl]-L-cysteine + methanol + H(+). Functionally, catalyzes the demethylation of isoprenylcysteine methylesters. In Oryza sativa subsp. japonica (Rice), this protein is Probable isoprenylcysteine alpha-carbonyl methylesterase ICMEL1 (IMCEL1).